A 246-amino-acid polypeptide reads, in one-letter code: Acetylglutamate kinase (246 aa).

Substrate contacts are provided by residues 30–31, arginine 52, and asparagine 151; that span reads GG.

It belongs to the acetylglutamate kinase family. ArgB subfamily.

The protein resides in the cytoplasm. It carries out the reaction N-acetyl-L-glutamate + ATP = N-acetyl-L-glutamyl 5-phosphate + ADP. Its pathway is amino-acid biosynthesis; L-arginine biosynthesis; N(2)-acetyl-L-ornithine from L-glutamate: step 2/4. Its function is as follows. Catalyzes the ATP-dependent phosphorylation of N-acetyl-L-glutamate. This chain is Acetylglutamate kinase, found in Methanopyrus kandleri (strain AV19 / DSM 6324 / JCM 9639 / NBRC 100938).